Here is a 79-residue protein sequence, read N- to C-terminus: Major outer membrane lipoprotein Lpp 3 (79 aa).

The first 21 residues, 1–21 (MNRTNKLILGAVVLGSALLAG), serve as a signal peptide directing secretion. The N-palmitoyl cysteine moiety is linked to residue Cys-22. Cys-22 carries the S-diacylglycerol cysteine lipid modification. Repeats lie at residues 25–35 (NAKIDQLSSDV) and 39–49 (SAKVDQLSNDV). Residues 28–76 (IDQLSSDVQTLSAKVDQLSNDVNAMRSDVQAAKDDAARANQRLDNKVLR) adopt a coiled-coil conformation. Residue Lys-79 is modified to N6-murein peptidoglycan lysine.

This sequence belongs to the Lpp family. In terms of assembly, homotrimer.

Its subcellular location is the cell outer membrane. The protein localises to the secreted. It localises to the cell wall. In terms of biological role, a highly abundant outer membrane lipoprotein that controls the distance between the inner and outer membranes. The only protein known to be covalently linked to the peptidoglycan network (PGN). Also non-covalently binds the PGN. The link between the cell outer membrane and PGN contributes to maintenance of the structural and functional integrity of the cell envelope, and maintains the correct distance between the PGN and the outer membrane. This chain is Major outer membrane lipoprotein Lpp 3, found in Salmonella paratyphi A (strain ATCC 9150 / SARB42).